Reading from the N-terminus, the 62-residue chain is Large ribosomal subunit protein bL32 (62 aa).

Belongs to the bacterial ribosomal protein bL32 family.

The chain is Large ribosomal subunit protein bL32 from Treponema denticola (strain ATCC 35405 / DSM 14222 / CIP 103919 / JCM 8153 / KCTC 15104).